A 130-amino-acid polypeptide reads, in one-letter code: UPF0102 protein SCO5602 (130 aa).

This sequence belongs to the UPF0102 family.

This Streptomyces coelicolor (strain ATCC BAA-471 / A3(2) / M145) protein is UPF0102 protein SCO5602.